A 190-amino-acid chain; its full sequence is UPF0301 protein RSc0675 (190 aa).

It belongs to the UPF0301 (AlgH) family.

This is UPF0301 protein RSc0675 from Ralstonia nicotianae (strain ATCC BAA-1114 / GMI1000) (Ralstonia solanacearum).